A 160-amino-acid chain; its full sequence is uncharacterized protein (160 aa).

This is an uncharacterized protein from Escherichia coli O157:H7.